Reading from the N-terminus, the 490-residue chain is Type I restriction enzyme EcoEI methylase subunit (490 aa).

S-adenosyl-L-methionine-binding positions include 163–168, 193–195, and E226; these read EFYTPR and TGG.

It belongs to the N(4)/N(6)-methyltransferase family. The type I restriction/modification system is composed of three polypeptides R, M and S; the restriction enzyme has stoichiometry R(2)M(2)S(1) while the methyltransferase is M(2)S(1).

The enzyme catalyses a 2'-deoxyadenosine in DNA + S-adenosyl-L-methionine = an N(6)-methyl-2'-deoxyadenosine in DNA + S-adenosyl-L-homocysteine + H(+). Its function is as follows. The subtype gamma methyltransferase (M) subunit of a type I restriction enzyme. The M and S subunits together form a methyltransferase (MTase) that methylates two adenine residues of the sequence 5'-GAGN(7)ATGC-3'. In the presence of the R subunit the complex can also act as an endonuclease, binding to the same target sequence but cutting the DNA some distance from this site. Whether the DNA is cut or modified depends on the methylation state of the target sequence. When the target site is unmodified, the DNA is cut. When the target site is hemimethylated, the complex acts as a maintenance MTase modifying the DNA so that both strands become methylated. After locating a non-methylated recognition site, the enzyme complex serves as a molecular motor that translocates DNA in an ATP-dependent manner until a collision occurs that triggers cleavage. In Escherichia coli, this protein is Type I restriction enzyme EcoEI methylase subunit (hsdM).